Here is a 186-residue protein sequence, read N- to C-terminus: MAAVTDVQRLQARVEELERWVYGPGGSRGSRKVADGLVKVQVALGNIASKRERVKVLYKKIEDLIKYLDPEYIDRIALPDASKLQFILAEEQFILSQVALLEQVEALVPMLDSTHIKAVPEHAARLQRLAQIHIQQQDQCVEITEESKALLEEYNKTTMLLSKQFVQWDELLCQLEAAKQVKPVEE.

Ala-2 carries the N-acetylalanine modification. The stretch at 135-157 (QQQDQCVEITEESKALLEEYNKT) forms a coiled coil.

This sequence belongs to the dynactin subunit 3 family. In terms of assembly, subunit of dynactin, a multiprotein complex part of a tripartite complex with dynein and a adapter, such as BICDL1, BICD2 or HOOK3. The dynactin complex is built around ACTR1A/ACTB filament and consists of an actin-related filament composed of a shoulder domain, a pointed end and a barbed end. Its length is defined by its flexible shoulder domain. The soulder is composed of 2 DCTN1 subunits, 4 DCTN2 and 2 DCTN3. The 4 DCNT2 (via N-terminus) bind the ACTR1A filament and act as molecular rulers to determine the length. The pointed end is important for binding dynein-dynactin cargo adapters. Consists of 4 subunits: ACTR10, DCNT4, DCTN5 and DCTN6. The barbed end is composed of a CAPZA1:CAPZB heterodimers, which binds ACTR1A/ACTB filament and dynactin and stabilizes dynactin.

It is found in the cytoplasm. The protein resides in the cytoskeleton. It localises to the microtubule organizing center. Its subcellular location is the centrosome. The protein localises to the chromosome. It is found in the centromere. The protein resides in the kinetochore. It localises to the spindle. Its subcellular location is the cleavage furrow. The protein localises to the midbody. Functionally, part of the dynactin complex that activates the molecular motor dynein for ultra-processive transport along microtubules. Together with dynein may be involved in spindle assembly and cytokinesis. The sequence is that of Dynactin subunit 3 (DCTN3) from Bos taurus (Bovine).